Consider the following 445-residue polypeptide: Tubulin alpha-3 chain (445 aa).

Residues Gln-11, Glu-72, Ser-141, Gly-145, Thr-146, Thr-180, Asn-207, and Asn-229 each contribute to the GTP site. Residue Glu-72 coordinates Mg(2+). Residue Glu-255 is part of the active site.

Belongs to the tubulin family. As to quaternary structure, dimer of alpha and beta chains. A typical microtubule is a hollow water-filled tube with an outer diameter of 25 nm and an inner diameter of 15 nM. Alpha-beta heterodimers associate head-to-tail to form protofilaments running lengthwise along the microtubule wall with the beta-tubulin subunit facing the microtubule plus end conferring a structural polarity. Microtubules usually have 13 protofilaments but different protofilament numbers can be found in some organisms and specialized cells. Interacts with NUM1. The cofactor is Mg(2+).

Its subcellular location is the cytoplasm. It is found in the cytoskeleton. It catalyses the reaction GTP + H2O = GDP + phosphate + H(+). Tubulin is the major constituent of microtubules, a cylinder consisting of laterally associated linear protofilaments composed of alpha- and beta-tubulin heterodimers. Microtubules grow by the addition of GTP-tubulin dimers to the microtubule end, where a stabilizing cap forms. Below the cap, tubulin dimers are in GDP-bound state, owing to GTPase activity of alpha-tubulin. The protein is Tubulin alpha-3 chain (TUB3) of Saccharomyces cerevisiae (strain ATCC 204508 / S288c) (Baker's yeast).